We begin with the raw amino-acid sequence, 709 residues long: Threonine--tRNA ligase, mitochondrial 1 (709 aa).

The transit peptide at 1-21 directs the protein to the mitochondrion; that stretch reads MLLRLTARSIRRFTTSSSSLP. Positions 73–135 constitute a TGS domain; sequence DPIKVTLPDG…EGDCKLELFK (63 aa). Cysteine 407, histidine 458, and histidine 584 together coordinate Zn(2+).

The protein belongs to the class-II aminoacyl-tRNA synthetase family.

The protein localises to the mitochondrion. It is found in the cytoplasm. The protein resides in the cytosol. The catalysed reaction is tRNA(Thr) + L-threonine + ATP = L-threonyl-tRNA(Thr) + AMP + diphosphate + H(+). This Arabidopsis thaliana (Mouse-ear cress) protein is Threonine--tRNA ligase, mitochondrial 1.